Reading from the N-terminus, the 102-residue chain is uncharacterized protein (102 aa).

The tract at residues 1–21 (MAESVNENNNNAGDSNGSGRT) is disordered. The N-linked (GlcNAc...) asparagine glycan is linked to Asn-16. A helical transmembrane segment spans residues 24 to 44 (NTIVTIVVVVIVVTLIIILAT). The segment at 49–102 (IGGSGKKVGAEEPATKLSSKSDDRNGGPNKKSPAKGSSKDDNNTEESVQSNLYG) is disordered. Basic and acidic residues predominate over residues 56 to 73 (VGAEEPATKLSSKSDDRN). Asn-90 is a glycosylation site (N-linked (GlcNAc...) asparagine). Residues 93 to 102 (EESVQSNLYG) are compositionally biased toward polar residues.

Its subcellular location is the membrane. This is an uncharacterized protein from Encephalitozoon cuniculi (strain GB-M1) (Microsporidian parasite).